The chain runs to 116 residues: MSATAATVPPAAPAGEGGPPAPPPNLTSNRRLQQTQAQVDEVVDIMRVNVDKVLERDQKLSELDDRADALQAGASQFETSAAKLKRKYWWKNLKMMIILGVICAIILIIIIVYFST.

Residues 1-28 (MSATAATVPPAAPAGEGGPPAPPPNLTS) are disordered. S2 carries the post-translational modification N-acetylserine. The Cytoplasmic portion of the chain corresponds to 2–94 (SATAATVPPA…KRKYWWKNLK (93 aa)). The v-SNARE coiled-coil homology domain maps to 31 to 91 (RLQQTQAQVD…AKLKRKYWWK (61 aa)). The interval 92–116 (NLKMMIILGVICAIILIIIIVYFST) is required for interaction with SEPT8. A helical; Anchor for type IV membrane protein transmembrane segment spans residues 95–114 (MMIILGVICAIILIIIIVYF). Residues 115-116 (ST) lie on the Vesicular side of the membrane.

It belongs to the synaptobrevin family. Part of the SNARE core complex containing SNAP25, VAMP2 and STX1A; this complex constitutes the basic catalytic machinery of the complex neurotransmitter release apparatus. Recruited to the SNARE complex following binding of the SNARE complex component STX1A to STXBP1. This complex binds to CPLX1. Interacts with VAPA and VAPB. Interacts (via N-terminus) with KCNB1 (via N-terminus and C-terminus); stimulates the channel inactivation rate of KCNB1. Interacts with POPDC1 and STX4. Interacts with WDFY2, PRKCZ and PRKCI. Forms a complex with WDFY2 and PRKCZ. Interacts with SEPT8; the interaction inhibits interaction of VAMP2 with SYP. Interacts with SYP; the interaction is inhibited by interaction with SEPT8. Interacts with PICALM. Interacts with alpha-synuclein/SNCA. Interacts with STX3 isoform 3B. In terms of processing, phosphorylated by PRKCZ in vitro and this phosphorylation is increased in the presence of WDFY2. (Microbial infection) Targeted and hydrolyzed by C.botulinum neurotoxin type B (BoNT/B, botB); 20 hours after treatment of spinal cord cells almost all the protein has been digested. BoNT/B hydrolyzes the 76-Gln-|-Phe-77 bond and inhibits neurotransmitter release. Post-translationally, (Microbial infection) Targeted and hydrolyzed by C.tetani toxin (tetX); 20 hours after treatment of spinal cord cells almost all the protein has been digested. Tetanus toxin hydrolyzes the 76-Gln-|-Phe-77 bond and inhibits neurotransmitter release. Expressed in the outer plexiform layer of the retina (at protein level).

It localises to the cytoplasmic vesicle. It is found in the secretory vesicle. The protein localises to the synaptic vesicle membrane. The protein resides in the cell membrane. Functionally, involved in the targeting and/or fusion of transport vesicles to their target membrane. Major SNARE protein of synaptic vesicles which mediates fusion of synaptic vesicles to release neurotransmitters. Essential for fast vesicular exocytosis and activity-dependent neurotransmitter release as well as fast endocytosis that mediates rapid reuse of synaptic vesicles. Modulates the gating characteristics of the delayed rectifier voltage-dependent potassium channel KCNB1. The sequence is that of Vesicle-associated membrane protein 2 (Vamp2) from Mus musculus (Mouse).